Here is a 1180-residue protein sequence, read N- to C-terminus: MSGLCLVLLLSIFAVSQSSGECSDVSFSSVASKLDGLKRVTRLSVSGHISAYHVKVSISDDDFQLVRLSNGNPLVLYSTLSNTPSWTHVDFLATEVRIFPAFEQATEDVRGPLLILTICDYDTPITAFDDSSYTVEAHHAGLVSMYENDLCVVFRTYRSGVFFFSMADQGDVLIAQIIHGTVHVIFDFGSLTPSRISAGKALDDGRWHEMRWLHQFDSVQLSIDGVLLNQTAPTGLYRKLDLHSVVHIGGRPNDDFSQGIETTFTGCIARLQLNNADLLQLSPNEVHNQCQMPKPPSFTLHNSSRAVLPFTFLPFSFEFRIVPINGPLVTLFDAENGTLVDVVIDEESKLHLVSNITKFKQAANPAIDVADGAWHSFSLRIRGVRMEIDIDGYTVLWLEGHEVRRVSQRLSNFILSASGCYRSVTIDLTSVRVDGNVTRGECTFQEKCLPNPCENGGGCVQSALDDYVCNCKEGYKGKNCHTTDLPHSCEEWVFTKGNKQKAVQGRKVLIDIDGGGEMQPINVTCKTERDEIGIDGVSTILEHDLLRPMIVTGDNKPGAVRYSLTYGISTEQMDRLVEGFEACSQFMRYTCRGGARLMTQGDERSPSSWYSTRSDKHGLQWGEAPPYSRMCSCAINGSCLHNRMCNCDSGEDSTDEGVNPYSQLLPVTGLFLGGTTKSSSIEVEIGPLKCRNRATFDPVTFSNRNAKLSGAQTFNQRTFDVSLHVKFSHSQMSILSWHSTDDLHWFHLYVNDGKIVGEVVNGGESQQIVSEHRYDDGKFHAIYWEADSTGMFLKVDGQRKSVKTSFILPTVYMWIVGSRTEKGSTGFAGVIRNVHLCGVELALGQYARKETERGVAIGDDGYCRPDLCQNGGQCVDKYDGYVCDCSMTPFGGSDCTKEYGMMVPAGSSIQIPWQNPAHQAMCHRIAIQTTSRNTTILRSKALFADSTFNMTVDDNGNLQMMAYDGFFFHFKRQSKRHNLSDDIMHDISFCASKHHFNVSVDGMQVITIEGNWTFFESFNVWHFLDENFEGCVSRIQTGSAFPLKNPKTARLNYSGKIRFGTCPIEAVSRQQMYDFNPQPDLISSTIKTSTEDIKIFSVSQNKQDLVSKAIIGGGILALSLFILCMSSLICYMRSRPEGVYKTNETGENCSPSRSEEPLVHNTTSNNNNNPTYASNKEYFC.

An N-terminal signal peptide occupies residues 1–20 (MSGLCLVLLLSIFAVSQSSG). Residues 21–1108 (ECSDVSFSSV…SQNKQDLVSK (1088 aa)) lie on the Extracellular side of the membrane. The 167-residue stretch at 124-290 (PITAFDDSSY…LSPNEVHNQC (167 aa)) folds into the Laminin G-like 1 domain. An N-linked (GlcNAc...) asparagine glycan is attached at Asn-229. Cysteines 267 and 290 form a disulfide. N-linked (GlcNAc...) asparagine glycans are attached at residues Asn-302, Asn-336, Asn-355, and Asn-436. The EGF-like 1 domain occupies 444–481 (FQEKCLPNPCENGGGCVQSALDDYVCNCKEGYKGKNCH). 3 disulfides stabilise this stretch: Cys-448/Cys-459, Cys-453/Cys-469, and Cys-471/Cys-480. Residues Asn-522 and Asn-636 are each glycosylated (N-linked (GlcNAc...) asparagine). Residues 695 to 863 (TFDPVTFSNR…GVAIGDDGYC (169 aa)) form the Laminin G-like 2 domain. The EGF-like 2 domain occupies 859–896 (DDGYCRPDLCQNGGQCVDKYDGYVCDCSMTPFGGSDCT). 3 disulfides stabilise this stretch: Cys-863–Cys-874, Cys-868–Cys-883, and Cys-885–Cys-895. Asn-933, Asn-949, Asn-978, Asn-997, Asn-1011, and Asn-1052 each carry an N-linked (GlcNAc...) asparagine glycan. A helical membrane pass occupies residues 1109-1129 (AIIGGGILALSLFILCMSSLI). Over 1130-1180 (CYMRSRPEGVYKTNETGENCSPSRSEEPLVHNTTSNNNNNPTYASNKEYFC) the chain is Cytoplasmic. Polar residues predominate over residues 1142 to 1152 (TNETGENCSPS). Residues 1142–1180 (TNETGENCSPSRSEEPLVHNTTSNNNNNPTYASNKEYFC) are disordered. Over residues 1161–1171 (NTTSNNNNNPT) the composition is skewed to low complexity.

This sequence belongs to the neurexin family. As to quaternary structure, interacts (via the intracellular domain) with F-actin; the interaction is required for anchoring F-actin at the membrane for gap junction formation. In terms of tissue distribution, highly expressed in pharyngeal g1 and g2 gland cells, pharyngeal muscle cells and the unilateral GABAergic RIS interneuron (at protein level). Expressed in pm5 pharyngeal muscle cells and the nerve ring.

It localises to the cell membrane. The protein resides in the cell junction. Its subcellular location is the gap junction. In terms of biological role, required for gap junction formation, playing a role in anchoring the cytoskeletal component F-actin to the membrane of adjacent cells and thus facilitating the formation of gap junction channels in embryonic cells, muscle cells and neuronal cells. Plays a role in maintaining gap junction activity to promote pharyngeal muscle contraction. This chain is Neurexin like receptor 1, found in Caenorhabditis elegans.